A 107-amino-acid chain; its full sequence is Large ribosomal subunit protein uL24 (107 aa).

It belongs to the universal ribosomal protein uL24 family. As to quaternary structure, part of the 50S ribosomal subunit.

Its function is as follows. One of two assembly initiator proteins, it binds directly to the 5'-end of the 23S rRNA, where it nucleates assembly of the 50S subunit. Functionally, one of the proteins that surrounds the polypeptide exit tunnel on the outside of the subunit. In Carboxydothermus hydrogenoformans (strain ATCC BAA-161 / DSM 6008 / Z-2901), this protein is Large ribosomal subunit protein uL24.